The chain runs to 546 residues: Medium-chain-fatty-acid--CoA ligase (546 aa).

Position 185 (Thr185) interacts with Mg(2+). 2 residues coordinate ATP: Trp235 and Thr329. A Mg(2+)-binding site is contributed by Glu330. Positions 417, 434, 438, and 443 each coordinate ATP.

This sequence belongs to the ATP-dependent AMP-binding enzyme family.

It localises to the cytoplasm. The enzyme catalyses a medium-chain fatty acid + ATP + CoA = a medium-chain fatty acyl-CoA + AMP + diphosphate. It functions in the pathway lipid metabolism; fatty acid metabolism. In Ectopseudomonas oleovorans (Pseudomonas oleovorans), this protein is Medium-chain-fatty-acid--CoA ligase.